Consider the following 182-residue polypeptide: MSRIGRKPIPVPQGVEVKVEGTTVTVKGPKGSLTREFHPDMKITFDGSQILVERPSDEKEHKALHGLTRTLINNMIVGVTNGYQKSLELVGVGYRAAKQGRKLVLTVGYSHPVEMDPPEGIEIEVPAQNQIIVKGIDKELVGNFAATIRAVREPEPYKGKGIKYTDEVIRRKAGKTGGKGKK.

The protein belongs to the universal ribosomal protein uL6 family. Part of the 50S ribosomal subunit.

This protein binds to the 23S rRNA, and is important in its secondary structure. It is located near the subunit interface in the base of the L7/L12 stalk, and near the tRNA binding site of the peptidyltransferase center. This is Large ribosomal subunit protein uL6 from Carboxydothermus hydrogenoformans (strain ATCC BAA-161 / DSM 6008 / Z-2901).